Reading from the N-terminus, the 138-residue chain is Membrane protein P8A7 (138 aa).

A run of 4 helical transmembrane segments spans residues 12–30, 32–56, 71–90, and 93–118; these read ILVI…YLFV, GLFH…IVLL, YTYW…LILG, and GFFL…LLGC.

Its subcellular location is the membrane. In Dictyostelium discoideum (Social amoeba), this protein is Membrane protein P8A7 (pmpA).